Reading from the N-terminus, the 144-residue chain is Snaclec trimecetin subunit beta (144 aa).

The first 23 residues, 1 to 23 (MGRFIFVSFGLLVVFLSLSGTAA), serve as a signal peptide directing secretion. 3 disulfide bridges follow: C25/C36, C53/C142, and C119/C134. Residues 32–143 (FRRYCYQVFQ…CSSKRYVVCK (112 aa)) enclose the C-type lectin domain.

The protein belongs to the snaclec family. As to quaternary structure, heterodimer of subunits alpha and beta; disulfide-linked. In terms of tissue distribution, expressed by the venom gland.

It is found in the secreted. Functionally, snaclec that induces platelet aggregation in either human platelet rich plasma (PRP) or washed platelet suspensions. It causes aggregation in a dose-dependent manner even in the absence of various platelet agonists such as ADP or von Willebrand factor (vWF). Interestingly, it does not induce aggregation in rabbit PRP. A monoclonal antibody against the platelet GPIb receptor blocks the aggregation induced by trimecetin, suggesting that it acts by binding to GPIb (GP1BA/GP1BB). This is Snaclec trimecetin subunit beta from Protobothrops mucrosquamatus (Taiwan habu).